A 216-amino-acid chain; its full sequence is Pyrophosphatase PpaX (216 aa).

The active-site Nucleophile is the Asp-9.

It belongs to the HAD-like hydrolase superfamily. PpaX family. The cofactor is Mg(2+).

The enzyme catalyses diphosphate + H2O = 2 phosphate + H(+). Functionally, hydrolyzes pyrophosphate formed during P-Ser-HPr dephosphorylation by HPrK/P. Might play a role in controlling the intracellular pyrophosphate pool. This is Pyrophosphatase PpaX from Bacillus cereus (strain Q1).